The sequence spans 91 residues: Small ribosomal subunit protein uS19 (91 aa).

Belongs to the universal ribosomal protein uS19 family.

In terms of biological role, protein S19 forms a complex with S13 that binds strongly to the 16S ribosomal RNA. This Desulfotalea psychrophila (strain LSv54 / DSM 12343) protein is Small ribosomal subunit protein uS19.